Consider the following 289-residue polypeptide: Serine/threonine-protein phosphatase Pgam5, mitochondrial (289 aa).

The helical transmembrane segment at 7 to 23 (FACGTGAGLAAYYLQRL) threads the bilayer.

This sequence belongs to the phosphoglycerate mutase family. BPG-dependent PGAM subfamily. Interacts with Pk92B/ASK1.

The protein localises to the mitochondrion outer membrane. The catalysed reaction is O-phospho-L-seryl-[protein] + H2O = L-seryl-[protein] + phosphate. The enzyme catalyses O-phospho-L-threonyl-[protein] + H2O = L-threonyl-[protein] + phosphate. In terms of biological role, displays phosphatase activity for serine/threonine residues, and dephosphorylates and activates Pk92B kinase. Has apparently no phosphoglycerate mutase activity. This is Serine/threonine-protein phosphatase Pgam5, mitochondrial from Drosophila sechellia (Fruit fly).